A 596-amino-acid chain; its full sequence is ATP-binding protein Uup (596 aa).

ABC transporter domains follow at residues 1 to 222 and 290 to 516; these read MSLI…RIEK and FKLD…SKIN. Residues 36–43 and 322–329 each bind ATP; these read GKNGAGKS and GDNGCGKS. The segment at 519-596 is C-terminal domain (CTD), binds DNA; that stretch reads IKIKNNFKKE…LEKNIINTKI (78 aa).

It belongs to the ABC transporter superfamily. ABCF family. Uup subfamily.

The protein localises to the cytoplasm. It carries out the reaction ATP + H2O = ADP + phosphate + H(+). Functionally, probably plays a role in ribosome assembly or function. May be involved in resolution of branched DNA intermediates that result from template switching in postreplication gaps. Binds DNA and has ATPase activity. The protein is ATP-binding protein Uup of Buchnera aphidicola subsp. Acyrthosiphon pisum (strain APS) (Acyrthosiphon pisum symbiotic bacterium).